The chain runs to 466 residues: MKTTVEKLSPTRTKLTISVTPEELQPSIKHAYEHIAGQVNIPGFRKGKVPPAIIDQRVGKEAVLEHAVNEGLDGFYRLAVEENEVRPLGRPEADISEWPNEKDFSGDLLLTIEVDVRPEITLPAFDGITLTVEAAQVTPDDVEEELDRLRSRFCTLVTVDRPAKKGDFAQIDLVAEIGGEEVDTAANISYEIGSGELIEGIDEALDTLTAGETTTFEAPLMGGDHEGENAQITVTLNAVKERELPEADDDFAQISSEFDTIGELRESLRGQVERAKSFGQGTAARDQLVEKLLELVEIPVPAQLVEDEVSRHLEQESRLEDDEHRAEVTESSEKTFRTQILLDEIAQRENVKVSQDELTQYLVQGAAQYNMDPNEFVKILGENGQISSMVGEIARNKALAIVLGKAEVVDTNGKQVDLTEFVALPDDGEAVDEDATPEDTDAPAEEAPAAEKPKKKAAAKKKAADK.

In terms of domain architecture, PPIase FKBP-type spans 166 to 245 (GDFAQIDLVA…LNAVKERELP (80 aa)). 2 disordered regions span residues 313-332 (LEQESRLEDDEHRAEVTESS) and 424-466 (LPDD…AADK). The span at 426–444 (DDGEAVDEDATPEDTDAPA) shows a compositional bias: acidic residues. A compositionally biased stretch (basic residues) spans 453-466 (PKKKAAAKKKAADK).

Belongs to the FKBP-type PPIase family. Tig subfamily.

It is found in the cytoplasm. The catalysed reaction is [protein]-peptidylproline (omega=180) = [protein]-peptidylproline (omega=0). In terms of biological role, involved in protein export. Acts as a chaperone by maintaining the newly synthesized protein in an open conformation. Functions as a peptidyl-prolyl cis-trans isomerase. The polypeptide is Trigger factor (Leifsonia xyli subsp. xyli (strain CTCB07)).